The primary structure comprises 85 residues: Acyl carrier protein (85 aa).

The region spanning 2-78 (SQISERVIDL…DAIAYIESHA (77 aa)) is the Carrier domain. Ser-37 bears the O-(pantetheine 4'-phosphoryl)serine mark.

It belongs to the acyl carrier protein (ACP) family. 4'-phosphopantetheine is transferred from CoA to a specific serine of apo-ACP by AcpS. This modification is essential for activity because fatty acids are bound in thioester linkage to the sulfhydryl of the prosthetic group.

It localises to the cytoplasm. It participates in lipid metabolism; fatty acid biosynthesis. Carrier of the growing fatty acid chain in fatty acid biosynthesis. In Azobacteroides pseudotrichonymphae genomovar. CFP2, this protein is Acyl carrier protein.